A 107-amino-acid chain; its full sequence is Integration host factor subunit beta (107 aa).

Positions 56–107 (RPARVGRNPKSGEKVQVPEKFVPHFKPGKELRERVDGRAGEPLKADDPDDER) are disordered. Over residues 82–101 (PGKELRERVDGRAGEPLKAD) the composition is skewed to basic and acidic residues.

Belongs to the bacterial histone-like protein family. In terms of assembly, heterodimer of an alpha and a beta chain.

In terms of biological role, this protein is one of the two subunits of integration host factor, a specific DNA-binding protein that functions in genetic recombination as well as in transcriptional and translational control. This Burkholderia vietnamiensis (strain G4 / LMG 22486) (Burkholderia cepacia (strain R1808)) protein is Integration host factor subunit beta.